Consider the following 534-residue polypeptide: Autophagic-related protein 16.2 (534 aa).

7 WD repeats span residues 243–281 (THDG…TDAS), 288–329 (GCLG…STFS), 330–368 (GHTD…CLKS), 371–411 (VGST…ATYS), 413–452 (ELGQ…IIHL), 459–498 (KTSC…LEKV), and 504–534 (SDSA…TLWR).

Belongs to the WD repeat tipD family. As to quaternary structure, homodimer (via N-terminus). Most likely a component of a complex at least containing atg-5, lgg-3, atg-16.1 and/or atg-16.2. Interacts (via N-terminus) with atg-16.1 (via N-terminus). Interacts (via N-terminus) with atg-5. Interacts (via WD 5-6 repeats) with lgg-2; the interaction is direct. Expressed in neurons, pharyngeal muscles, body wall muscle cells and intestinal cells.

It localises to the cytoplasm. Its subcellular location is the cell membrane. Functionally, most likely a component of the atg-5-atg-12-atg-16.1/atg-16.2 complex, which is recruited to the preautophagosomal membrane and associates with lgg-2 to promote autophagosome formation. Plays a role in the recruitment of lipidated lgg-1 probably to the autophagosome membrane to promote autophagosome formation. Furthermore, association with atg-5 is required for the nucleation of lgg-1 positive autophagosomes. Although its role in autophagosome formation may be distinct to the role of atg-16.2, it functions in a partially redundant manner with atg-16.1 to regulate autophagic processes. In a daf-18/PTEN- and daf-16/FOXO-dependent manner, required for maintaining the numbers of germ stem cell progenitors in the gonad during the late phases of larval development. The polypeptide is Autophagic-related protein 16.2 (Caenorhabditis elegans).